Reading from the N-terminus, the 134-residue chain is U34-theraphotoxin-Cg1a (134 aa).

Residues 1–19 (MKLAVVFLLTTVVFTLAQS) form the signal peptide. 3 disulfides stabilise this stretch: C24–C35, C29–C53, and C63–C84. A disordered region spans residues 97-134 (EQSSTSTSSTQGPITSSTVTTQSEATTETETTTAAEGK). Low complexity predominate over residues 99-134 (SSTSTSSTQGPITSSTVTTQSEATTETETTTAAEGK).

The protein belongs to the neurotoxin 32 family. Expressed by the venom gland.

The protein localises to the secreted. The polypeptide is U34-theraphotoxin-Cg1a (Chilobrachys guangxiensis (Chinese earth tiger tarantula)).